The sequence spans 364 residues: 2-oxoadipate dioxygenase/decarboxylase, chloroplastic/amyloplastic (364 aa).

The transit peptide at 1–49 (MAVALAGARSPGAGAILSLRRLAPAAAAPVRLGGSGTPGTRRRRGIAMA) directs the protein to the chloroplast. 2-oxoadipate contacts are provided by H107 and R111. H107 is a Fe(2+) binding site. Residue H243 participates in Fe(2+) binding. 2-oxoadipate is bound by residues Q289 and Y313. E315 provides a ligand contact to Fe(2+).

This sequence belongs to the 2-oxoadipate dioxygenase/decarboxylase family. Fe(2+) serves as cofactor. In terms of tissue distribution, expressed in roots, stems, leaf sheaths, leaf blades, panicles, and endosperm.

The protein localises to the plastid. The protein resides in the chloroplast. It localises to the amyloplast. The enzyme catalyses 2-oxoadipate + O2 = (R)-2-hydroxyglutarate + CO2. Its pathway is amino-acid degradation. In terms of biological role, catalyzes the decarboxylation and hydroxylation of 2-oxoadipate (2OA) to form D-2-hydroxyglutarate (D-2-HGA). Is involved in a D-lysine catabolic pathway. Involved in the regulation of starch synthesis and amyloplast development within the peripheral endosperm during the grain-filling stage. The chain is 2-oxoadipate dioxygenase/decarboxylase, chloroplastic/amyloplastic from Oryza sativa subsp. japonica (Rice).